A 1233-amino-acid polypeptide reads, in one-letter code: Structural maintenance of chromosomes protein 1A (1233 aa).

An ATP-binding site is contributed by 32 to 39 (GPNGSGKS). Coiled coils occupy residues 104–124 (EYKINNKVVQLHEYSEELEKL) and 163–503 (ELAQ…KAEI). A compositionally biased stretch (basic and acidic residues) spans 284 to 293 (IKEKDSELNQ). 2 disordered regions span residues 284 to 308 (IKEKDSELNQKRPQYIKAKENTSHK) and 348 to 369 (QEFEERMEEESQSQGRDLTLEE). 2 positions are modified to phosphoserine: S358 and S360. One can recognise an SMC hinge domain in the interval 515–629 (VYGRLIDLCQ…DNVEDARRIA (115 aa)). K648 and K713 each carry N6-acetyllysine. Residues 660–935 (KAKARRWDEK…RHNLLQACKM (276 aa)) adopt a coiled-coil conformation. A disordered region spans residues 947–968 (MDDISQEEGSSQGEDSVSGSQR). The segment covering 953–967 (EEGSSQGEDSVSGSQ) has biased composition (low complexity). Residues S957, S962, S966, and S970 each carry the phosphoserine modification. A coiled-coil region spans residues 991-1068 (KDAQAEEEIK…FEQIKKERFD (78 aa)). Residue K1037 is modified to N6-acetyllysine.

It belongs to the SMC family. SMC1 subfamily. In terms of assembly, forms a heterodimer with SMC3 in cohesin complexes. Cohesin complexes are composed of the SMC1 (SMC1A or meiosis-specific SMC1B) and SMC3 heterodimer attached via their SMC hinge domain, RAD21 which link them, and one STAG protein (STAG1, STAG2 or meiosis-specific STAG3), which interacts with RAD21. In germ cell cohesin complexes, SMC1A is mutually exclusive with SMC1B. Found in a complex with CDCA5, SMC3 and RAD21, PDS5A/SCC-112 and PDS5B/APRIN. Interacts with NDC80, SYCP2, STAG3, BRCA1 and BRAT1. The cohesin complex interacts with the cohesin loading complex subunits NIPBL/Scc2 (via HEAT repeats) and MAU2/Scc4. NIPBL directly contacts all members of the complex, RAD21, SMC1A/B, SMC3 and STAG1. Interacts with RPGR. Found in a complex containing POLE and SMC3. Post-translationally, phosphorylated upon ionizing radiation or DNA methylation. Phosphorylation of Ser-957 and Ser-966 activates it and is required for S-phase checkpoint activation. In terms of processing, ubiquitinated by the DCX(DCAF15) complex, leading to its degradation.

The protein resides in the nucleus. It localises to the chromosome. Its subcellular location is the centromere. Involved in chromosome cohesion during cell cycle and in DNA repair. Involved in DNA repair via its interaction with BRCA1 and its related phosphorylation by ATM, and works as a downstream effector in the ATM/NBS1 branch of S-phase checkpoint. Central component of cohesin complex. The cohesin complex is required for the cohesion of sister chromatids after DNA replication. The cohesin complex apparently forms a large proteinaceous ring within which sister chromatids can be trapped. At anaphase, the complex is cleaved and dissociates from chromatin, allowing sister chromatids to segregate. The cohesin complex may also play a role in spindle pole assembly during mitosis. Involved in DNA repair via its interaction with BRCA1 and its related phosphorylation by ATM, or via its phosphorylation by ATR. Works as a downstream effector both in the ATM/NBS1 branch and in the ATR/MSH2 branch of S-phase checkpoint. The sequence is that of Structural maintenance of chromosomes protein 1A (SMC1A) from Bos taurus (Bovine).